The sequence spans 241 residues: Cobalt transport protein CbiM (241 aa).

The N-terminal stretch at 1–23 (MKKNLTFFMVIALLFTITPNVYA) is a signal peptide. A run of 6 helical transmembrane segments spans residues 29–49 (GFLP…FIII), 66–86 (MLLG…IPSV), 98–118 (LSAI…VLIF), 121–141 (ILLA…MGIM), 160–180 (VAVF…TSVQ), and 202–222 (IFSI…VIIF).

It belongs to the CbiM family. As to quaternary structure, forms an energy-coupling factor (ECF) transporter complex composed of an ATP-binding protein (A component, CbiO), a transmembrane protein (T component, CbiQ) and 2 possible substrate-capture proteins (S components, CbiM and CbiN) of unknown stoichimetry.

The protein localises to the cell membrane. Its pathway is cofactor biosynthesis; adenosylcobalamin biosynthesis. Part of the energy-coupling factor (ECF) transporter complex CbiMNOQ involved in cobalt import. The polypeptide is Cobalt transport protein CbiM (Clostridium tetani (strain Massachusetts / E88)).